Reading from the N-terminus, the 1097-residue chain is MSSSAIQVAKTATYLPDLVEVQRASFKWFLDEGLIEELDSFSPITDYTGKLELHFVGNEYRLKRPRHDVEEAKRRDATFASQMYVTCRLVNKETGEIKEQEVFIGELPLMTERGTFIINGAERVIVNQIVRSPGVYFKDEQDKNGRRTYNASVIPNRGAWLKFETDKNDLLHVRVDKTRKINAHVLMRAMGLSDNDVIDKLRHPEYYKKSIEAANEEGISSEDQALLELYKKLRPGEPPSVSGGQQLLQTRFFDPKRYDLGRVGRYKINKKLRLTIPDTVRTLTHEDVLSTLDYLINLELDVGGASLDDIDHLGNRRVRSVGELLQNQVRVGLNRLERIIKERMTVGETDSLTPAQLVNPKPLVAAVKEFFGSSQLSQFMDQTNPLAELTHKRRISALGPGGLTRERAGFAVRDIHPSHYGRLCPIETPEGPNAGLINSLATHARVNQYGFIETPFWKVENGRLIKEGDPIYLSADLEDECRVAPGDVATDADGQILAELIPVRYRQDFEKVPPEQVDYVQLSPVQVISVATSLIPFLEHDDANRALMGSNMQRQAVPLLRPERPLVGTGLETQVARDSGMVPISRVNGMVTFVDATAIIVRDEDGVDHTHYLQKYQRSNQDTCLNQRPIVCQGDPVIVGQVLADGSACEGGEIALGQNVLVAYMPWEGYNYEDAILVSERLVKDDLYTSVHIEKYEIEARQTKLGPEEITREIPNVAEESLGNLDEMGIIRIGAFVESGDILVGKVTPKGESDQPPEEKLLRAIFGEKARDVRDNSLRVPSTERGRVVDVRIYTREQGDELPPGANMVARVYVAQRRKIQVGDKMAGRHGNKGIISRILPREDMPFLPDGTPVDIVLNPLGVPSRMNVGQVFECLMGWAAANLDCRVKVVPFDEMYGAEKSQQTVEAYLKEAAKQPGKEWVYNPENPGKLQLIDGRSGEPFDQPVTVGYAQILKLVHLVDDKIHARSTGPYSLVTQQPLGGKAQQGGQRLGEMEVWALEAYGAAYTLQELLTVKSDDMQGRNEALNAIVKGKPIPRPGTPESFKVLMRELQSLGLDIAVYTDEGKEVDLMQDVNPRRSTPSRPTYESLGVADYDED.

Residues 1072-1097 are disordered; it reads QDVNPRRSTPSRPTYESLGVADYDED.

The protein belongs to the RNA polymerase beta chain family. In cyanobacteria the RNAP catalytic core is composed of 2 alpha, 1 beta, 1 beta', 1 gamma and 1 omega subunit. When a sigma factor is associated with the core the holoenzyme is formed, which can initiate transcription.

The enzyme catalyses RNA(n) + a ribonucleoside 5'-triphosphate = RNA(n+1) + diphosphate. DNA-dependent RNA polymerase catalyzes the transcription of DNA into RNA using the four ribonucleoside triphosphates as substrates. The chain is DNA-directed RNA polymerase subunit beta from Prochlorococcus marinus (strain MIT 9303).